Consider the following 1129-residue polypeptide: ISWI chromatin-remodeling complex ATPase ISW1 (1129 aa).

Residues 144–177 (KANGKGKGKHQDVRRRKTEHEEDAELLKEEDSDD) form a disordered region. Basic residues predominate over residues 147-160 (GKGKGKHQDVRRRK). Residues 164-177 (EEDAELLKEEDSDD) are compositionally biased toward acidic residues. Residues 208-373 (VSLHKNKIAG…WALLNFLLPD (166 aa)) enclose the Helicase ATP-binding domain. ATP is bound at residue 221–228 (DEMGLGKT). The DEAH box motif lies at 324–327 (DEAH). Positions 506-657 (VLDKLLKKLK…QLVIQQNRTS (152 aa)) constitute a Helicase C-terminal domain. The tract at residues 683-705 (FKSGTSTGSAGTPEPGSGEKGDD) is disordered. Threonine 694 bears the Phosphothreonine mark. Serine 846 carries the phosphoserine modification. SANT domains follow at residues 882–935 (EGFT…SNIE) and 988–1052 (NKRT…LLQC). The segment covering 1073-1108 (KEDENGKRIREEFADQTANEKENVDGVESKKAKIED) has biased composition (basic and acidic residues). Residues 1073–1129 (KEDENGKRIREEFADQTANEKENVDGVESKKAKIEDTSNVGTEQLVAEKIPENETTH) form a disordered region.

Belongs to the SNF2/RAD54 helicase family. ISWI subfamily. In terms of assembly, component of the ISW1A complex, which at least consists of ISW1 and IOC3. Component of the ISW1B complex, which at least consists of ISW1, IOC2 and IOC4.

The protein resides in the nucleus. Catalytic component of ISW1-type complexes, which act by remodeling the chromatin by catalyzing an ATP-dependent alteration in the structure of nucleosomal DNA. They are involved in coordinating transcriptional repression, activation and elongation phases. The ISW1A complex represses gene expression at initiation through specific positioning of a promoter proximal dinucleosome. The ISW1B complex acts within coding regions to control the amount of RNA polymerase II released into productive elongation and to coordinate elongation with termination and pre-mRNA processing. This chain is ISWI chromatin-remodeling complex ATPase ISW1 (ISW1), found in Saccharomyces cerevisiae (strain ATCC 204508 / S288c) (Baker's yeast).